Consider the following 312-residue polypeptide: Ribosomal protein L11 methyltransferase (312 aa).

4 residues coordinate S-adenosyl-L-methionine: Thr-160, Gly-181, Asp-203, and Asn-246.

The protein belongs to the methyltransferase superfamily. PrmA family.

Its subcellular location is the cytoplasm. It carries out the reaction L-lysyl-[protein] + 3 S-adenosyl-L-methionine = N(6),N(6),N(6)-trimethyl-L-lysyl-[protein] + 3 S-adenosyl-L-homocysteine + 3 H(+). Its function is as follows. Methylates ribosomal protein L11. This Staphylococcus epidermidis (strain ATCC 12228 / FDA PCI 1200) protein is Ribosomal protein L11 methyltransferase.